Consider the following 639-residue polypeptide: Serine/threonine-protein phosphatase 2B catalytic subunit A1 (639 aa).

Fe cation is bound by residues Asp120, His122, and Asp148. Residues Asp148 and Asn180 each contribute to the Zn(2+) site. Residue His181 is the Proton donor of the active site. Residues His229 and His311 each coordinate Zn(2+). The span at 494-503 (KSDIENERLP) shows a compositional bias: basic and acidic residues. Positions 494 to 602 (KSDIENERLP…PSTRRRSLEN (109 aa)) are disordered. 2 stretches are compositionally biased toward low complexity: residues 515 to 527 (ASPSASPIMPATP) and 546 to 572 (TPISSAIASGSPGSPGTPTSPSIGGPP).

This sequence belongs to the PPP phosphatase family. PP-2B subfamily. In terms of assembly, composed of two components (A and B), the A component is the catalytic subunit and the B component confers calcium sensitivity. Fe(3+) is required as a cofactor. The cofactor is Zn(2+).

The catalysed reaction is O-phospho-L-seryl-[protein] + H2O = L-seryl-[protein] + phosphate. It carries out the reaction O-phospho-L-threonyl-[protein] + H2O = L-threonyl-[protein] + phosphate. Functionally, calcium-dependent, calmodulin-stimulated protein phosphatase. This subunit may have a role in the calmodulin activation of calcineurin. The protein is Serine/threonine-protein phosphatase 2B catalytic subunit A1 (CNA1) of Cryptococcus neoformans var. grubii serotype A (strain H99 / ATCC 208821 / CBS 10515 / FGSC 9487) (Filobasidiella neoformans var. grubii).